Reading from the N-terminus, the 292-residue chain is Protoheme IX farnesyltransferase (292 aa).

The next 9 helical transmembrane spans lie at 13 to 33 (ILFG…QGSI), 35 to 55 (ILLL…GCVV), 84 to 104 (VALV…WFGV), 106 to 126 (GYAF…YSLW), 135 to 155 (TVIG…AVTH), 161 to 181 (ALLL…AIAI), 206 to 226 (IECV…YCFG), 231 to 251 (FFLI…IIGF), and 263 to 283 (FFLY…FTYQ).

It belongs to the UbiA prenyltransferase family. Protoheme IX farnesyltransferase subfamily.

The protein localises to the cell inner membrane. It catalyses the reaction heme b + (2E,6E)-farnesyl diphosphate + H2O = Fe(II)-heme o + diphosphate. It functions in the pathway porphyrin-containing compound metabolism; heme O biosynthesis; heme O from protoheme: step 1/1. Converts heme B (protoheme IX) to heme O by substitution of the vinyl group on carbon 2 of heme B porphyrin ring with a hydroxyethyl farnesyl side group. The polypeptide is Protoheme IX farnesyltransferase (Acinetobacter baumannii (strain AB307-0294)).